A 560-amino-acid polypeptide reads, in one-letter code: N-acetylglucosamine-6-sulfatase (560 aa).

The segment at 1–25 (MRLLSLAPDRPRRGGPRHLTSGSPA) is disordered. An N-terminal signal peptide occupies residues 1-48 (MRLLSLAPDRPRRGGPRHLTSGSPALPPPPPLLLLLLLLGGCLGVSGA). Residues Asp-63, Asp-64, and Cys-99 each contribute to the Ca(2+) site. Cys-99 (nucleophile) is an active-site residue. Cys-99 carries the post-translational modification 3-oxoalanine (Cys). 7 N-linked (GlcNAc...) asparagine glycosylation sites follow: Asn-119, Asn-125, Asn-191, Asn-206, Asn-218, Asn-287, and Asn-325. The Ca(2+) site is built by Asp-334 and Asn-335. Residues Asn-370, Asn-395, Asn-413, Asn-430, Asn-457, and Asn-488 are each glycosylated (N-linked (GlcNAc...) asparagine). Ser-549 carries the phosphoserine modification.

Belongs to the sulfatase family. It depends on Ca(2+) as a cofactor. In terms of processing, the conversion to 3-oxoalanine (also known as C-formylglycine, FGly), of a serine or cysteine residue in prokaryotes and of a cysteine residue in eukaryotes, is critical for catalytic activity.

It is found in the lysosome. It carries out the reaction Hydrolysis of the 6-sulfate groups of the N-acetyl-D-glucosamine 6-sulfate units of heparan sulfate and keratan sulfate.. Hydrolyzes 6-sulfate groups in N-acetyl-d-glucosaminide units of heparin sulfate and keratan sulfate. In Bos taurus (Bovine), this protein is N-acetylglucosamine-6-sulfatase (GNS).